A 275-amino-acid polypeptide reads, in one-letter code: Acetyl-coenzyme A carboxylase carboxyl transferase subunit beta (275 aa).

Positions 21–275 constitute a CoA carboxyltransferase N-terminal domain; sequence GLWIKCQCGA…IKIIGMHQAG (255 aa). Zn(2+) contacts are provided by C26, C28, C44, and C47. The C4-type zinc-finger motif lies at 26 to 47; that stretch reads CQCGAILFAKDLERNLKVCQKC.

The protein belongs to the AccD/PCCB family. As to quaternary structure, acetyl-CoA carboxylase is a heterohexamer composed of biotin carboxyl carrier protein (AccB), biotin carboxylase (AccC) and two subunits each of ACCase subunit alpha (AccA) and ACCase subunit beta (AccD). The cofactor is Zn(2+).

It is found in the cytoplasm. It carries out the reaction N(6)-carboxybiotinyl-L-lysyl-[protein] + acetyl-CoA = N(6)-biotinyl-L-lysyl-[protein] + malonyl-CoA. It functions in the pathway lipid metabolism; malonyl-CoA biosynthesis; malonyl-CoA from acetyl-CoA: step 1/1. In terms of biological role, component of the acetyl coenzyme A carboxylase (ACC) complex. Biotin carboxylase (BC) catalyzes the carboxylation of biotin on its carrier protein (BCCP) and then the CO(2) group is transferred by the transcarboxylase to acetyl-CoA to form malonyl-CoA. This chain is Acetyl-coenzyme A carboxylase carboxyl transferase subunit beta, found in Desulforudis audaxviator (strain MP104C).